Reading from the N-terminus, the 114-residue chain is uncharacterized protein (114 aa).

A lipid anchor (N-myristoyl glycine; by host) is attached at glycine 2. The next 2 membrane-spanning stretches (helical) occupy residues 11 to 31 (FGLI…KDLL) and 44 to 64 (GLMW…LVAI). A disordered region spans residues 73 to 114 (VNKDSKDPKDKSIEFDDSPIRDGSSGTPDNSNEPTDLSVETS). Residues 75-92 (KDSKDPKDKSIEFDDSPI) are compositionally biased toward basic and acidic residues. Over residues 96-114 (SSGTPDNSNEPTDLSVETS) the composition is skewed to polar residues.

The protein resides in the membrane. This is an uncharacterized protein from Acanthamoeba polyphaga (Amoeba).